The chain runs to 194 residues: MHILTAGVDEAGRGPLVGSVFAAAVILPEIFDLPGLTDSKKLSEKKRDALAEMIKNQAVAWHVAAAGPEEIASLNILHATMLAMKRAVDGLAVRPEKIFIDGNRIPEHLNIPAEAVVKGDSKIIEISAASVLAKTARDAEMYALAQRHPQYGFDKHKGYGTKQHLEALEKYGVLPEHRRDFAPVRNLFAQQALF.

In terms of domain architecture, RNase H type-2 spans 3–193 (ILTAGVDEAG…VRNLFAQQAL (191 aa)). Positions 9, 10, and 101 each coordinate a divalent metal cation.

This sequence belongs to the RNase HII family. Mn(2+) is required as a cofactor. Requires Mg(2+) as cofactor.

Its subcellular location is the cytoplasm. The catalysed reaction is Endonucleolytic cleavage to 5'-phosphomonoester.. Functionally, endonuclease that specifically degrades the RNA of RNA-DNA hybrids. The polypeptide is Ribonuclease HII (Neisseria meningitidis serogroup C / serotype 2a (strain ATCC 700532 / DSM 15464 / FAM18)).